Consider the following 154-residue polypeptide: MAFKIDDFTIQEDQVKIAKDVFKRFDKRGQEKISTTDLGPAFRALNLTVKPDTLKEWADQVDDDATGFIDFNGFLICYGKKLQEDQDERDLRDAFRVLDKNKRGEIDVEDLRWILKGLGDDLTEEEIDDMIRDTDTDGSGFVDFDEFYKLMTSE.

EF-hand domains lie at 13–48, 49–84, 86–121, and 122–154; these read DQVK…LNLT, VKPD…KLQE, QDER…LGDD, and LTEE…MTSE. Ca(2+) contacts are provided by D62, D64, T66, D99, N101, E105, D110, D135, D137, S139, and E146.

The protein localises to the tegument membrane. Its function is as follows. Calcium-binding protein. The protein is 20 kDa calcium-binding protein (SM20) of Schistosoma mansoni (Blood fluke).